The following is a 362-amino-acid chain: RNA-binding protein 48 (362 aa).

One can recognise an RRM domain in the interval 46 to 124; sequence WYLLIQGVPA…GLLHVCYAPE (79 aa). Positions 334-362 are disordered; sequence EVISSVPKPPEDKVEDVHRSRPLKQRRRI. Basic and acidic residues predominate over residues 342-352; that stretch reads PPEDKVEDVHR. Positions 353–362 are enriched in basic residues; the sequence is SRPLKQRRRI.

The protein belongs to the RBM48 family. In terms of assembly, component of the minor spliceosome. Within this complex, interacts with ARMC7 and PRPF8/PRP8.

Its function is as follows. As a component of the minor spliceosome, involved in the splicing of U12-type introns in pre-mRNAs. The polypeptide is RNA-binding protein 48 (RBM48) (Bos taurus (Bovine)).